Consider the following 383-residue polypeptide: Ovalbumin (383 aa).

Position 2 is an N-acetylglycine (Gly2). The segment at residues 22-48 (HHANDNMLYSPFAILSTLAMVFLGAKD) is a signal peptide (not cleaved). Ser69 carries the phosphoserine modification. Cys74 and Cys121 are oxidised to a cystine. 2 N-linked (GlcNAc...) asparagine glycosylation sites follow: Asn293 and Asn312. Ser345 is modified (phosphoserine).

Belongs to the serpin family. Ov-serpin subfamily. The signal sequence is not cleaved. The functional signal for membrane translocation of ovalbumin becomes accessible when the nascent chain is 50 to 60 residues long. The hydrophobic sequence which lies between residues 27 and 43 folds back on the preceding residues to form an amphipathic hairpin structure which is the signal element recognized by the membrane. As to expression, major protein of egg white.

The protein resides in the secreted. Its function is as follows. Storage protein of egg white. Lack protease inhibitory activity. This is Ovalbumin (SERPINB14) from Coturnix japonica (Japanese quail).